The sequence spans 153 residues: Ribosome maturation factor RimP (153 aa).

This sequence belongs to the RimP family.

The protein resides in the cytoplasm. Required for maturation of 30S ribosomal subunits. The protein is Ribosome maturation factor RimP of Clostridioides difficile (strain 630) (Peptoclostridium difficile).